The primary structure comprises 289 residues: 4-diphosphocytidyl-2-C-methyl-D-erythritol kinase (289 aa).

Lysine 10 is an active-site residue. ATP is bound at residue 94–104; the sequence is PVAAGLAGGSS. Aspartate 136 is a catalytic residue.

Belongs to the GHMP kinase family. IspE subfamily.

It catalyses the reaction 4-CDP-2-C-methyl-D-erythritol + ATP = 4-CDP-2-C-methyl-D-erythritol 2-phosphate + ADP + H(+). It participates in isoprenoid biosynthesis; isopentenyl diphosphate biosynthesis via DXP pathway; isopentenyl diphosphate from 1-deoxy-D-xylulose 5-phosphate: step 3/6. Functionally, catalyzes the phosphorylation of the position 2 hydroxy group of 4-diphosphocytidyl-2C-methyl-D-erythritol. The chain is 4-diphosphocytidyl-2-C-methyl-D-erythritol kinase from Geobacillus sp. (strain WCH70).